Here is a 245-residue protein sequence, read N- to C-terminus: tRNA pseudouridine synthase A (245 aa).

The active-site Nucleophile is the Asp-52. Substrate is bound at residue Tyr-111.

This sequence belongs to the tRNA pseudouridine synthase TruA family. As to quaternary structure, homodimer.

It carries out the reaction uridine(38/39/40) in tRNA = pseudouridine(38/39/40) in tRNA. Its function is as follows. Formation of pseudouridine at positions 38, 39 and 40 in the anticodon stem and loop of transfer RNAs. This is tRNA pseudouridine synthase A from Thermotoga neapolitana (strain ATCC 49049 / DSM 4359 / NBRC 107923 / NS-E).